A 312-amino-acid polypeptide reads, in one-letter code: HTH-type transcriptional regulator PtxR (312 aa).

The 58-residue stretch at 11 to 68 (LNLNHLYAFVAVAEHNSFTAAAEALGLSKSLLSEQLRRLEADLGIQLLTRTTRRMTLT) folds into the HTH lysR-type domain. The H-T-H motif DNA-binding region spans 28–47 (FTAAAEALGLSKSLLSEQLR).

Belongs to the LysR transcriptional regulatory family. In terms of assembly, monomer in solution. May dimerize on binding to DNA. Interacts with PtxS in the absence of 2-ketogluconate. Binding of the 2-ketogluconate effector to PtxS causes PtxS/PtxR complex dissociation.

Negatively regulated by PtxS, which interacts with PtxR and prevents its activity. Its function is as follows. Plays an important role in the regulation of the production of the virulence factor exotoxin A (toxA), via positive regulation of the transcription of the toxA gene. Acts by binding directly to the toxA promoter region. Besides toxA, PtxR modulates the expression of genes that code for the QS-controlled virulence factors. It negatively regulates the expression of the rhamnolipid and pyocyanine genes, through the autoinducer synthase RhlI, and the PQS synthesis operon pqsABCDE, while it positively regulates the expression of lasB through the autoinducer synthase LasI. Also positively regulates the expression of the exotoxin A regulatory protein (toxR or regA). In addition, is involved in the positive regulation of glucose metabolism via the regulation of the expression of the kgu and gad operons. Acts by binding directly to the promoter region of the kgu and gad operons. This Pseudomonas aeruginosa (strain ATCC 15692 / DSM 22644 / CIP 104116 / JCM 14847 / LMG 12228 / 1C / PRS 101 / PAO1) protein is HTH-type transcriptional regulator PtxR.